A 293-amino-acid polypeptide reads, in one-letter code: 33 kDa chaperonin (293 aa).

2 disulfide bridges follow: Cys-236–Cys-238 and Cys-269–Cys-272.

This sequence belongs to the HSP33 family. Under oxidizing conditions two disulfide bonds are formed involving the reactive cysteines. Under reducing conditions zinc is bound to the reactive cysteines and the protein is inactive.

It is found in the cytoplasm. Its function is as follows. Redox regulated molecular chaperone. Protects both thermally unfolding and oxidatively damaged proteins from irreversible aggregation. Plays an important role in the bacterial defense system toward oxidative stress. The protein is 33 kDa chaperonin of Lactobacillus delbrueckii subsp. bulgaricus (strain ATCC BAA-365 / Lb-18).